Consider the following 491-residue polypeptide: Probable glycine dehydrogenase (decarboxylating) subunit 2 (491 aa).

Position 273 is an N6-(pyridoxal phosphate)lysine (lysine 273).

The protein belongs to the GcvP family. C-terminal subunit subfamily. The glycine cleavage system is composed of four proteins: P, T, L and H. In this organism, the P 'protein' is a heterodimer of two subunits. Requires pyridoxal 5'-phosphate as cofactor.

The enzyme catalyses N(6)-[(R)-lipoyl]-L-lysyl-[glycine-cleavage complex H protein] + glycine + H(+) = N(6)-[(R)-S(8)-aminomethyldihydrolipoyl]-L-lysyl-[glycine-cleavage complex H protein] + CO2. In terms of biological role, the glycine cleavage system catalyzes the degradation of glycine. The P protein binds the alpha-amino group of glycine through its pyridoxal phosphate cofactor; CO(2) is released and the remaining methylamine moiety is then transferred to the lipoamide cofactor of the H protein. The polypeptide is Probable glycine dehydrogenase (decarboxylating) subunit 2 (Bacillus cereus (strain G9842)).